The sequence spans 312 residues: Pseudouridine-5'-phosphate glycosidase (312 aa).

Glu31 serves as the catalytic Proton donor. Substrate-binding residues include Lys93 and Val113. Position 145 (Asp145) interacts with Mn(2+). Position 147-149 (147-149 (SAD)) interacts with substrate. Lys166 serves as the catalytic Nucleophile.

The protein belongs to the pseudouridine-5'-phosphate glycosidase family. As to quaternary structure, homotrimer. It depends on Mn(2+) as a cofactor. Fe(2+) is required as a cofactor. Co(2+) serves as cofactor.

It carries out the reaction D-ribose 5-phosphate + uracil = psi-UMP + H2O. With respect to regulation, inhibited by Zn(2+) and Ni(2+). Functionally, catalyzes the reversible cleavage of pseudouridine 5'-phosphate (PsiMP) to ribose 5-phosphate and uracil. Functions biologically in the cleavage direction, as part of a pseudouridine degradation pathway. This chain is Pseudouridine-5'-phosphate glycosidase, found in Escherichia coli (strain K12).